Reading from the N-terminus, the 674-residue chain is Protein tesmin/TSO1-like CXC 2 (674 aa).

Composition is skewed to polar residues over residues 1–16 (MDTP…TPIS) and 76–89 (THNS…NSVE). Disordered regions lie at residues 1–20 (MDTP…KSRF) and 69–113 (KESR…GLNI). Basic and acidic residues predominate over residues 95–109 (STSHEEVPAEGEDTK). The 126-residue stretch at 373–498 (SCKRCNCKKS…RCEGCKNAFG (126 aa)) folds into the CRC domain. 2 disordered regions span residues 504-529 (SIDM…SQQN) and 623-655 (IPNI…RRNG). The segment covering 507 to 516 (MEAEQEEENE) has biased composition (acidic residues).

Belongs to the lin-54 family. As to expression, ubiquitous but expressed mostly in all the aerial organs with highest expression in flowers.

It localises to the nucleus. Its function is as follows. Plays a role in development of both male and female reproductive tissues. The polypeptide is Protein tesmin/TSO1-like CXC 2 (TCX2) (Arabidopsis thaliana (Mouse-ear cress)).